We begin with the raw amino-acid sequence, 161 residues long: FAD synthase (161 aa).

Residues 19–20 (TF), 24–27 (HPGH), Asp106, and Tyr133 each bind ATP.

Belongs to the archaeal FAD synthase family. As to quaternary structure, homodimer. Requires a divalent metal cation as cofactor.

It carries out the reaction FMN + ATP + H(+) = FAD + diphosphate. It participates in cofactor biosynthesis; FAD biosynthesis; FAD from FMN: step 1/1. Catalyzes the transfer of the AMP portion of ATP to flavin mononucleotide (FMN) to produce flavin adenine dinucleotide (FAD) coenzyme. The polypeptide is FAD synthase (Methanothermobacter marburgensis (strain ATCC BAA-927 / DSM 2133 / JCM 14651 / NBRC 100331 / OCM 82 / Marburg) (Methanobacterium thermoautotrophicum)).